We begin with the raw amino-acid sequence, 327 residues long: Aspartate carbamoyltransferase catalytic subunit (327 aa).

Residues Arg73 and Thr74 each contribute to the carbamoyl phosphate site. Lys101 is an L-aspartate binding site. Residues Arg123, His153, and Gln156 each coordinate carbamoyl phosphate. L-aspartate is bound by residues Arg186 and Arg241. 2 residues coordinate carbamoyl phosphate: Gly282 and Pro283.

Belongs to the aspartate/ornithine carbamoyltransferase superfamily. ATCase family. Heterododecamer (2C3:3R2) of six catalytic PyrB chains organized as two trimers (C3), and six regulatory PyrI chains organized as three dimers (R2).

The catalysed reaction is carbamoyl phosphate + L-aspartate = N-carbamoyl-L-aspartate + phosphate + H(+). Its pathway is pyrimidine metabolism; UMP biosynthesis via de novo pathway; (S)-dihydroorotate from bicarbonate: step 2/3. Catalyzes the condensation of carbamoyl phosphate and aspartate to form carbamoyl aspartate and inorganic phosphate, the committed step in the de novo pyrimidine nucleotide biosynthesis pathway. This is Aspartate carbamoyltransferase catalytic subunit from Acidithiobacillus ferrooxidans (strain ATCC 23270 / DSM 14882 / CIP 104768 / NCIMB 8455) (Ferrobacillus ferrooxidans (strain ATCC 23270)).